Reading from the N-terminus, the 293-residue chain is NAD kinase (293 aa).

Catalysis depends on Asp74, which acts as the Proton acceptor. NAD(+)-binding positions include 74–75, 148–149, His159, Arg176, Asp178, Thr186, 189–194, and Gln248; these read DG, NE, and TAYSLS.

The protein belongs to the NAD kinase family. Homodimer. It depends on a divalent metal cation as a cofactor.

The protein resides in the cytoplasm. It carries out the reaction NAD(+) + ATP = ADP + NADP(+) + H(+). Functionally, involved in the regulation of the intracellular balance of NAD and NADP, and is a key enzyme in the biosynthesis of NADP. Catalyzes specifically the phosphorylation on 2'-hydroxyl of the adenosine moiety of NAD to yield NADP. The polypeptide is NAD kinase (Yersinia pestis).